Reading from the N-terminus, the 201-residue chain is Thymidylate kinase (201 aa).

Position 7 to 14 (7 to 14) interacts with ATP; sequence GIDGSGKS.

It belongs to the thymidylate kinase family.

It carries out the reaction dTMP + ATP = dTDP + ADP. Phosphorylation of dTMP to form dTDP in both de novo and salvage pathways of dTTP synthesis. In Thermosipho africanus (strain TCF52B), this protein is Thymidylate kinase.